We begin with the raw amino-acid sequence, 620 residues long: 1-deoxy-D-xylulose-5-phosphate synthase (620 aa).

Residues H75 and 116 to 118 (AHS) each bind thiamine diphosphate. Mg(2+) is bound at residue D147. Residues 148–149 (GA), N177, Y284, and E366 each bind thiamine diphosphate. N177 lines the Mg(2+) pocket.

The protein belongs to the transketolase family. DXPS subfamily. Homodimer. The cofactor is Mg(2+). It depends on thiamine diphosphate as a cofactor.

The catalysed reaction is D-glyceraldehyde 3-phosphate + pyruvate + H(+) = 1-deoxy-D-xylulose 5-phosphate + CO2. It functions in the pathway metabolic intermediate biosynthesis; 1-deoxy-D-xylulose 5-phosphate biosynthesis; 1-deoxy-D-xylulose 5-phosphate from D-glyceraldehyde 3-phosphate and pyruvate: step 1/1. Functionally, catalyzes the acyloin condensation reaction between C atoms 2 and 3 of pyruvate and glyceraldehyde 3-phosphate to yield 1-deoxy-D-xylulose-5-phosphate (DXP). In Bordetella bronchiseptica (strain ATCC BAA-588 / NCTC 13252 / RB50) (Alcaligenes bronchisepticus), this protein is 1-deoxy-D-xylulose-5-phosphate synthase.